Reading from the N-terminus, the 297-residue chain is tRNA uridine(34) hydroxylase (297 aa).

A Rhodanese domain is found at 133–228 (RGEEVVFFDG…YGETFKDQGL (96 aa)). The active-site Cysteine persulfide intermediate is the Cys-188.

This sequence belongs to the TrhO family.

It carries out the reaction uridine(34) in tRNA + AH2 + O2 = 5-hydroxyuridine(34) in tRNA + A + H2O. Functionally, catalyzes oxygen-dependent 5-hydroxyuridine (ho5U) modification at position 34 in tRNAs. The protein is tRNA uridine(34) hydroxylase of Arthrobacter sp. (strain FB24).